A 408-amino-acid polypeptide reads, in one-letter code: UDP-N-acetylglucosamine--dolichyl-phosphate N-acetylglucosaminephosphotransferase (408 aa).

The next 2 membrane-spanning stretches (helical) occupy residues 6–26 (SLLGFIGICCLPPILLLIYLP) and 32–52 (WIIVQSGFFSFGAGLLTYKLI). 2 residues coordinate UDP-N-acetyl-alpha-D-glucosamine: Asp-68 and Glu-84. 2 helical membrane-spanning segments follow: residues 87–107 (GICVAVVYLVCVILFQTFQWF) and 120–140 (AALTSICFMILLGFGDDVLNL). Lys-145 contributes to the dolichyl phosphate binding site. 2 consecutive transmembrane segments (helical) span residues 147–167 (ILPMFASLPLLVAYAGGTTVV) and 181–201 (LGVVFDLGIFYRIYLLMLAIF). 200–208 (IFCTNSINI) provides a ligand contact to dolichyl phosphate. Asn-207 contacts Mg(2+). Asn-213 contacts UDP-N-acetyl-alpha-D-glucosamine. Helical transmembrane passes span 221–241 (VVIATSIIIHNLIELTIASSV) and 258–278 (HLFSLILMIPFLFTTISLLFY). Asp-289 contributes to the Mg(2+) binding site. Residues 297–317 (MCFAVVAILCHFSKTLLLFFI) form a helical membrane-spanning segment. 338 to 340 (RHR) contacts UDP-N-acetyl-alpha-D-glucosamine. Transmembrane regions (helical) follow at residues 351–371 (MEAIPTNLTIINLLLMITGPL) and 376–396 (LCVYLLIFQGLCSCVGFGIRY).

It belongs to the glycosyltransferase 4 family. In terms of assembly, homodimer. Mg(2+) serves as cofactor.

The protein localises to the endoplasmic reticulum membrane. The enzyme catalyses a di-trans,poly-cis-dolichyl phosphate + UDP-N-acetyl-alpha-D-glucosamine = an N-acetyl-alpha-D-glucosaminyl-diphospho-di-trans,poly-cis-dolichol + UMP. The protein operates within protein modification; protein glycosylation. Its activity is regulated as follows. Inhibited by natural nucleoside antibiotic tunicamycin, which acts as a structural analog and competitor of UDP-GlcNAc. In terms of biological role, UDP-N-acetylglucosamine--dolichyl-phosphate N-acetylglucosaminephosphotransferase that operates in the biosynthetic pathway of dolichol-linked oligosaccharides, the glycan precursors employed in protein asparagine (N)-glycosylation. The assembly of dolichol-linked oligosaccharides begins on the cytosolic side of the endoplasmic reticulum membrane and finishes in its lumen. The sequential addition of sugars to dolichol pyrophosphate produces dolichol-linked oligosaccharides containing fourteen sugars, including two GlcNAcs, nine mannoses and three glucoses. Once assembled, the oligosaccharide is transferred from the lipid to nascent proteins by oligosaccharyltransferases. Catalyzes the initial step of dolichol-linked oligosaccharide biosynthesis, transfering GlcNAc-1-P from cytosolic UDP-GlcNAc onto the carrier lipid dolichyl phosphate (P-dolichol), yielding GlcNAc-P-P-dolichol embedded in the cytoplasmic leaflet of the endoplasmic reticulum membrane. This chain is UDP-N-acetylglucosamine--dolichyl-phosphate N-acetylglucosaminephosphotransferase (alg7), found in Dictyostelium discoideum (Social amoeba).